Reading from the N-terminus, the 428-residue chain is Putative zinc metalloprotease SAS1196 (428 aa).

H21 contributes to the Zn(2+) binding site. E22 is a catalytic residue. H25 is a Zn(2+) binding site. Transmembrane regions (helical) follow at residues 172–194, 309–331, 352–374, and 401–420; these read FLTL…IGLA, GSTL…GFSF, IISL…LIPI, and TTII…LVTW. In terms of domain architecture, PDZ spans 186–269; that stretch reads ALVLFIGLAY…TKSVELTPKK (84 aa).

It belongs to the peptidase M50B family. Zn(2+) is required as a cofactor.

Its subcellular location is the cell membrane. The polypeptide is Putative zinc metalloprotease SAS1196 (Staphylococcus aureus (strain MSSA476)).